Reading from the N-terminus, the 352-residue chain is tRNA N6-adenosine threonylcarbamoyltransferase (352 aa).

Residues histidine 115 and histidine 119 each coordinate Fe cation. Residues 137–141 (LVSGG), aspartate 170, glycine 183, and asparagine 281 contribute to the substrate site. Residue aspartate 309 participates in Fe cation binding.

This sequence belongs to the KAE1 / TsaD family. Fe(2+) is required as a cofactor.

It localises to the cytoplasm. The enzyme catalyses L-threonylcarbamoyladenylate + adenosine(37) in tRNA = N(6)-L-threonylcarbamoyladenosine(37) in tRNA + AMP + H(+). In terms of biological role, required for the formation of a threonylcarbamoyl group on adenosine at position 37 (t(6)A37) in tRNAs that read codons beginning with adenine. Is involved in the transfer of the threonylcarbamoyl moiety of threonylcarbamoyl-AMP (TC-AMP) to the N6 group of A37, together with TsaE and TsaB. TsaD likely plays a direct catalytic role in this reaction. The protein is tRNA N6-adenosine threonylcarbamoyltransferase of Methylocapsa acidiphila.